A 332-amino-acid chain; its full sequence is Cilia- and flagella-associated protein 119 (332 aa).

Positions 1–10 (MITPRSSQSL) are enriched in polar residues. Disordered regions lie at residues 1 to 70 (MITP…ANLF), 246 to 271 (EDEE…EAEQ), and 308 to 332 (RLSN…SKAK). Residues 14–30 (VQTELEHSPKLQEEPDR) are compositionally biased toward basic and acidic residues. Over residues 49–58 (ESPAEATSSP) the composition is skewed to polar residues. A coiled-coil region spans residues 287 to 308 (LNKELRQLQQLVEERLKESEER).

In terms of tissue distribution, specifically expressed in testis (at protein level).

It localises to the cell projection. It is found in the cilium. The protein resides in the flagellum. Its subcellular location is the cytoplasmic vesicle. The protein localises to the secretory vesicle. It localises to the acrosome. It is found in the cytoplasm. This is Cilia- and flagella-associated protein 119 from Rattus norvegicus (Rat).